The following is a 188-amino-acid chain: dCTP deaminase (188 aa).

109–114 (KSTYAR) provides a ligand contact to dCTP. The Proton donor/acceptor role is filled by Glu135. The dCTP site is built by Gln154, Tyr168, and Gln178.

Belongs to the dCTP deaminase family. In terms of assembly, homotrimer.

It catalyses the reaction dCTP + H2O + H(+) = dUTP + NH4(+). It functions in the pathway pyrimidine metabolism; dUMP biosynthesis; dUMP from dCTP (dUTP route): step 1/2. In terms of biological role, catalyzes the deamination of dCTP to dUTP. This Helicobacter pylori (strain Shi470) protein is dCTP deaminase.